Here is an 861-residue protein sequence, read N- to C-terminus: APC membrane recruitment protein 3 (861 aa).

8 disordered regions span residues 1-77 (MELK…PKGG), 179-206 (AEGK…PPGE), 261-289 (PSLE…GPLQ), 351-415 (PLCP…FPRD), 514-558 (RGPT…GGAT), 576-644 (GLLA…SQKE), 716-742 (MLEQ…STQD), and 786-822 (AHGS…SQQE). Residues 362–384 (SKASSIDTGTPKSEQPESVSTSD) are compositionally biased toward polar residues. Residues 518–530 (PRAPPTPGQPAAP) show a composition bias toward pro residues. The segment covering 584 to 595 (ALGGATQGTGTL) has biased composition (low complexity). Residues 598–609 (DASREEETRGHS) show a composition bias toward basic and acidic residues. Composition is skewed to polar residues over residues 615 to 629 (SMES…TSGK) and 719 to 730 (QKQSSSSPSMTT).

The protein belongs to the Amer family.

Its subcellular location is the cell membrane. Functionally, regulator of the canonical Wnt signaling pathway. Acts by specifically binding phosphatidylinositol 4,5-bisphosphate (PtdIns(4,5)P2), translocating to the cell membrane. This Homo sapiens (Human) protein is APC membrane recruitment protein 3 (AMER3).